We begin with the raw amino-acid sequence, 217 residues long: 7-cyano-7-deazaguanine synthase (217 aa).

10–20 (FSGGQDSTTCL) contacts ATP. Residues C185, C194, C197, and C200 each contribute to the Zn(2+) site.

The protein belongs to the QueC family. As to quaternary structure, homodimer. Zn(2+) is required as a cofactor.

The enzyme catalyses 7-carboxy-7-deazaguanine + NH4(+) + ATP = 7-cyano-7-deazaguanine + ADP + phosphate + H2O + H(+). It functions in the pathway purine metabolism; 7-cyano-7-deazaguanine biosynthesis. Its function is as follows. Catalyzes the ATP-dependent conversion of 7-carboxy-7-deazaguanine (CDG) to 7-cyano-7-deazaguanine (preQ(0)). The sequence is that of 7-cyano-7-deazaguanine synthase from Streptococcus thermophilus (strain CNRZ 1066).